An 80-amino-acid polypeptide reads, in one-letter code: UPF0291 protein llmg_1475 (80 aa).

Belongs to the UPF0291 family.

Its subcellular location is the cytoplasm. This is UPF0291 protein llmg_1475 from Lactococcus lactis subsp. cremoris (strain MG1363).